Here is a 321-residue protein sequence, read N- to C-terminus: Glucokinase (321 aa).

An ATP-binding site is contributed by 8 to 13 (GDVGGT).

The protein belongs to the bacterial glucokinase family.

The protein localises to the cytoplasm. The catalysed reaction is D-glucose + ATP = D-glucose 6-phosphate + ADP + H(+). The polypeptide is Glucokinase (Klebsiella pneumoniae (strain 342)).